We begin with the raw amino-acid sequence, 498 residues long: MFSLQEICRKNIYFLPDWLSEHVIQRLGLYWEKHGSLQRIGDDYVLIQQDLIIPINEALRMAGEEGNDEVVQLLLLWEGNIHYAIIGALESDHYSLIRKLYDQIEDCHDILPLIQDPKIFEKCHELDKFCNILCLVLHAVKNDMLCILQEYKMHLSGEDIQVVFETACRSQKNDIVSWMGQNIAIYNSGVIFDIAFDKMNVSLLSIGYTLLFNHHINNTNENINSLLTQHLEWAAGMGLLHFMLETLKYGGDVTIIVLSEAVKYDHRKILDYFLRRKNLYQEDLEELLLLAIRADCSKKTLNLLLSYLNYSINNIRKKILQCVKEYETTVIIKILWKRKINLIEPILADFIGYHSYTYMVDFMREFSIHPEKMIKMAARESREDLIIKFSKKVCKEPKDRLHYLKSLVYTMRHKEGKQLLIYTIHNLYKACHLESKEMFNLARFYARHNAVIQFKSICHDLSKLNINIKNLLLECLGIAIKKNYFQLIKTIETDMRYE.

The protein belongs to the asfivirus MGF 505 family.

Functionally, plays a role in virus cell tropism, and may be required for efficient virus replication in macrophages. The sequence is that of Protein MGF 505-5R from African swine fever virus (strain Badajoz 1971 Vero-adapted) (Ba71V).